Here is a 952-residue protein sequence, read N- to C-terminus: Pentatricopeptide repeat-containing protein At5g04810, chloroplastic (952 aa).

The transit peptide at 1–60 (MDNGGSVLSLSAPHFPYSATILRRHSPVASISFSLKQPPPQPPEPPESPPDLRRPEKSIG) directs the protein to the chloroplast. 2 disordered regions span residues 30–95 (SISF…VSPL) and 115–163 (LRLS…EFRQ). Over residues 37 to 49 (QPPPQPPEPPESP) the composition is skewed to pro residues. The segment covering 58-68 (SIGSSSSSSSP) has biased composition (low complexity). Over residues 122-133 (SPPPPPPPPPPV) the composition is skewed to pro residues. A compositionally biased stretch (basic and acidic residues) spans 137–163 (TQFRDEFRSDTKPPEEETRNPQQEFRQ). Residues 167–238 (IFVGNLPTWI…VEFHGRILTV (72 aa)) enclose the RRM domain. Basic and acidic residues predominate over residues 259-280 (EGEEDTKMSNKSSWHQEREGSR). A disordered region spans residues 259 to 281 (EGEEDTKMSNKSSWHQEREGSRK). PPR repeat units follow at residues 308-342 (SRTE…GITP), 343-377 (TSRI…GIEM), 378-412 (SLVT…HKTL), 413-447 (NASI…GIDA), 448-482 (PIAI…GFTP), 483-517 (TVVT…GVKH), 518-552 (NLKT…GMKP), 553-587 (DVIL…RHRP), 588-622 (TTRT…GCVP), 623-657 (TVHT…GVSA), 658-692 (NEHT…GLDV), 693-727 (DIFT…NIPR), 728-762 (NSFV…GVKP), 763-797 (DIHT…GVKP), and 798-832 (NIKT…GIKP). Residues 918 to 952 (DQVSDVDSDEDDVDGEDGEDDEDVNSVSDLLSPYK) form a disordered region. Positions 921-941 (SDVDSDEDDVDGEDGEDDEDV) are enriched in acidic residues.

The protein belongs to the PPR family. P subfamily.

The protein localises to the plastid. Its subcellular location is the chloroplast. In terms of biological role, may play a role in the plastid ribosome biogenesis. The sequence is that of Pentatricopeptide repeat-containing protein At5g04810, chloroplastic (PPR4) from Arabidopsis thaliana (Mouse-ear cress).